Consider the following 73-residue polypeptide: Arabinogalactan protein 16 (73 aa).

The N-terminal stretch at 1 to 26 (MASRNSVTGFALFSFVFAVILSLAGA) is a signal peptide. Position 27 is a pyrrolidone carboxylic acid (glutamine 27). 4-hydroxyproline occurs at positions 31, 33, and 35. O-linked (Ara...) hydroxyproline glycans are attached at residues proline 31, proline 33, and proline 35. Serine 37 is lipidated: GPI-anchor amidated serine. Positions 38–73 (DGTSIDQGIAYLLMVVALVLTYLIHPLDASSSYSFF) are cleaved as a propeptide — removed in mature form.

The protein belongs to the AG-peptide AGP family. In terms of processing, contains 4-hydroxyproline; hydroxylated on Pro-31, Pro-33 and Pro-35. Post-translationally, O-glycosylated on hydroxyprolines; noncontiguous hydroxylproline residues are glycosylated with arabinogalactan. As to expression, predominantly expressed in flowers.

The protein localises to the cell membrane. Functionally, proteoglycan that seems to be implicated in diverse developmental roles such as differentiation, cell-cell recognition, embryogenesis and programmed cell death. The sequence is that of Arabinogalactan protein 16 from Arabidopsis thaliana (Mouse-ear cress).